The chain runs to 784 residues: Rabenosyn-5 (784 aa).

Alanine 2 bears the N-acetylalanine mark. A Phosphoserine modification is found at serine 3. The segment at 14-37 (FLCPLCLKDLQSFYQLHSHYEEEH) adopts a C2H2-type zinc-finger fold. Residues 100 to 263 (RSHLSDFKKH…HCKDTLLKRE (164 aa)) are necessary for the correct targeting to endosomes. An FYVE-type zinc finger spans residues 157–260 (DQDVPFCPDC…CCTHCKDTLL (104 aa)). 6 residues coordinate Zn(2+): cysteine 163, cysteine 166, cysteine 179, cysteine 182, cysteine 187, and cysteine 190. Residues 207 to 224 (KESLSTHTSPSQSPNSVH) show a composition bias toward polar residues. A disordered region spans residues 207 to 241 (KESLSTHTSPSQSPNSVHGSRRGSISSMSSVSSVL). 4 positions are modified to phosphoserine: serine 215, serine 219, serine 226, and serine 230. Positions 228–240 (RGSISSMSSVSSV) are enriched in low complexity. Residues cysteine 252 and cysteine 255 each contribute to the Zn(2+) site. The segment at 264-500 (QQIDEKEHTP…QLQDEYDQQQ (237 aa)) is necessary for interaction with RAB4A. A necessary for interaction with EHD1 region spans residues 264 to 784 (QQIDEKEHTP…TLAKQKGGTD (521 aa)). 2 coiled-coil regions span residues 378 to 414 (TKEQ…LEER) and 472 to 531 (QAKA…RELE). Basic and acidic residues predominate over residues 390–400 (KEEMERKRAVE). The disordered stretch occupies residues 390-429 (KEEMERKRAVERQAALESQRRLEERQSGLASRAANGEVAS). In terms of domain architecture, UIM spans 496–515 (YDQQQTEKAIELSRRQAEEE). The disordered stretch occupies residues 574–732 (DLGSSPVPSS…DSDSGPEAEE (159 aa)). Polar residues predominate over residues 579 to 598 (PVPSSTAPKTPSLSSTQPTR). The necessary for interaction with RAB5A stretch occupies residues 627-784 (PFDEEDLSSP…TLAKQKGGTD (158 aa)). Acidic residues predominate over residues 663 to 673 (PFEEEDEEEEA). Serine 684 is modified (phosphoserine). The span at 722 to 732 (MDSDSGPEAEE) shows a compositional bias: acidic residues.

Interacts with EHD1, RAB4A, RAB5A, RAB14, RAB22A, RAB24 and VPS45. Binds simultaneously to RAB4A and RAB5A in vitro. Interacts with RAB4A and RAB5A that has been activated by GTP binding.

It is found in the cell membrane. The protein localises to the early endosome membrane. Functionally, rab4/Rab5 effector protein acting in early endocytic membrane fusion and membrane trafficking of recycling endosomes. Required for endosome fusion either homotypically or with clathrin coated vesicles. Plays a role in the lysosomal trafficking of CTSD/cathepsin D from the Golgi to lysosomes. Also promotes the recycling of transferrin directly from early endosomes to the plasma membrane. Binds phospholipid vesicles containing phosphatidylinositol 3-phosphate (PtdInsP3). Plays a role in the recycling of transferrin receptor to the plasma membrane. This Homo sapiens (Human) protein is Rabenosyn-5.